The following is a 122-amino-acid chain: Large ribosomal subunit protein uL14 (122 aa).

This sequence belongs to the universal ribosomal protein uL14 family. In terms of assembly, part of the 50S ribosomal subunit. Forms a cluster with proteins L3 and L19. In the 70S ribosome, L14 and L19 interact and together make contacts with the 16S rRNA in bridges B5 and B8.

In terms of biological role, binds to 23S rRNA. Forms part of two intersubunit bridges in the 70S ribosome. This is Large ribosomal subunit protein uL14 from Streptococcus suis (strain 05ZYH33).